Consider the following 1057-residue polypeptide: Carbamoyl phosphate synthase large chain (1057 aa).

The carboxyphosphate synthetic domain stretch occupies residues M1–E401. 12 residues coordinate ATP: R129, R169, G175, G176, K208, I210, E215, G241, I242, H243, Q284, and E298. Residues R133–I327 form the ATP-grasp 1 domain. Mg(2+) is bound by residues Q284, E298, and N300. Positions 284, 298, and 300 each coordinate Mn(2+). Residues Y402 to S546 form an oligomerization domain region. The interval V547–G929 is carbamoyl phosphate synthetic domain. An ATP-grasp 2 domain is found at E671–I861. The ATP site is built by R707, R746, L748, E752, G777, V778, H779, S780, Q820, and E832. Residues Q820, E832, and N834 each contribute to the Mg(2+) site. Mn(2+) is bound by residues Q820, E832, and N834. In terms of domain architecture, MGS-like spans M930 to M1057. The segment at M930–M1057 is allosteric domain.

It belongs to the CarB family. As to quaternary structure, composed of two chains; the small (or glutamine) chain promotes the hydrolysis of glutamine to ammonia, which is used by the large (or ammonia) chain to synthesize carbamoyl phosphate. Tetramer of heterodimers (alpha,beta)4. The cofactor is Mg(2+). It depends on Mn(2+) as a cofactor.

It carries out the reaction hydrogencarbonate + L-glutamine + 2 ATP + H2O = carbamoyl phosphate + L-glutamate + 2 ADP + phosphate + 2 H(+). It catalyses the reaction hydrogencarbonate + NH4(+) + 2 ATP = carbamoyl phosphate + 2 ADP + phosphate + 2 H(+). Its pathway is amino-acid biosynthesis; L-arginine biosynthesis; carbamoyl phosphate from bicarbonate: step 1/1. It functions in the pathway pyrimidine metabolism; UMP biosynthesis via de novo pathway; (S)-dihydroorotate from bicarbonate: step 1/3. In terms of biological role, large subunit of the glutamine-dependent carbamoyl phosphate synthetase (CPSase). CPSase catalyzes the formation of carbamoyl phosphate from the ammonia moiety of glutamine, carbonate, and phosphate donated by ATP, constituting the first step of 2 biosynthetic pathways, one leading to arginine and/or urea and the other to pyrimidine nucleotides. The large subunit (synthetase) binds the substrates ammonia (free or transferred from glutamine from the small subunit), hydrogencarbonate and ATP and carries out an ATP-coupled ligase reaction, activating hydrogencarbonate by forming carboxy phosphate which reacts with ammonia to form carbamoyl phosphate. This Staphylococcus saprophyticus subsp. saprophyticus (strain ATCC 15305 / DSM 20229 / NCIMB 8711 / NCTC 7292 / S-41) protein is Carbamoyl phosphate synthase large chain.